The chain runs to 203 residues: Small ribosomal subunit protein uS4 (203 aa).

Positions 93-156 (RRLDNVVYRL…MKVPAILEAV (64 aa)) constitute an S4 RNA-binding domain.

This sequence belongs to the universal ribosomal protein uS4 family. Part of the 30S ribosomal subunit. Contacts protein S5. The interaction surface between S4 and S5 is involved in control of translational fidelity.

Its function is as follows. One of the primary rRNA binding proteins, it binds directly to 16S rRNA where it nucleates assembly of the body of the 30S subunit. With S5 and S12 plays an important role in translational accuracy. This Streptococcus agalactiae serotype Ia (strain ATCC 27591 / A909 / CDC SS700) protein is Small ribosomal subunit protein uS4.